The sequence spans 209 residues: Ribonuclease HII (209 aa).

The RNase H type-2 domain maps to 19 to 209; that stretch reads CTIVGVDEVG…ASGITKLYNK (191 aa). A divalent metal cation is bound by residues Asp25, Glu26, and Asp118.

It belongs to the RNase HII family. It depends on Mn(2+) as a cofactor. Mg(2+) serves as cofactor.

Its subcellular location is the cytoplasm. The catalysed reaction is Endonucleolytic cleavage to 5'-phosphomonoester.. Functionally, endonuclease that specifically degrades the RNA of RNA-DNA hybrids. This is Ribonuclease HII from Ehrlichia chaffeensis (strain ATCC CRL-10679 / Arkansas).